We begin with the raw amino-acid sequence, 1280 residues long: Fibronectin type III domain-containing protein (1280 aa).

Residues 1 to 19 form the signal peptide; the sequence is MWQILLAISIFSLSKLSNA. The Extracellular portion of the chain corresponds to 20 to 1156; it reads QQQPKVAPPQ…RVSTPIYQSA (1137 aa). 5 disulfides stabilise this stretch: cysteine 58-cysteine 111, cysteine 268-cysteine 321, cysteine 369-cysteine 417, cysteine 460-cysteine 511, and cysteine 553-cysteine 604. 5 Fibronectin type-III domains span residues 628 to 722, 730 to 824, 830 to 933, 939 to 1033, and 1039 to 1131; these read PFPP…TGSF, PEKW…VKQF, PTGK…VAAD, PGPP…TEKT, and PAKP…PASD. Over residues 1118 to 1130 the composition is skewed to polar residues; it reads YPSQENPQESPAS. A disordered region spans residues 1118 to 1144; that stretch reads YPSQENPQESPASDITEARPRPGISNV. Residues 1157-1177 form a helical membrane-spanning segment; it reads WFIALLVLIALLLLVLLTFVL. Residues 1178 to 1280 lie on the Cytoplasmic side of the membrane; that stretch reads YTRHQGAKYL…KDPSSLATFV (103 aa). Residues 1206–1280 form a disordered region; that stretch reads DEEEGSFSNN…KDPSSLATFV (75 aa). The segment covering 1262–1273 has biased composition (basic and acidic residues); the sequence is DEKKAPPEEKDP.

As to expression, component of the acid-insoluble organic matrix of the aragonitic skeleton (at protein level).

The protein localises to the membrane. This chain is Fibronectin type III domain-containing protein, found in Acropora millepora (Staghorn coral).